The chain runs to 413 residues: uncharacterized protein (413 aa).

7 helical membrane passes run 10–32 (GLTI…GRLP), 162–184 (VFLH…LVFL), 189–211 (LLPR…AFLV), 232–254 (LSFR…LFFF), 259–276 (YSYS…ILLV), 288–310 (ALMV…SFVT), and 325–347 (FAYA…SLIL).

The protein resides in the cell membrane. This is an uncharacterized protein from Aquifex aeolicus (strain VF5).